The primary structure comprises 699 residues: Ciliated left-right organizer metallopeptidase (699 aa).

The signal sequence occupies residues 1 to 18 (MKMWRLLLLGVATGRCLH). Residues 19 to 663 (EETQKSVRLL…SLDHNPSMTE (645 aa)) lie on the Extracellular side of the membrane. H238 serves as a coordination point for Zn(2+). E239 is an active-site residue. Zn(2+) is bound by residues H242 and H318. Residues 664-684 (LLLSTGFCLLVLILVGALGTL) traverse the membrane as a helical segment. Over 685–699 (AYQKRAMLQVAPSTT) the chain is Cytoplasmic.

The protein belongs to the peptidase M8 family. It depends on Zn(2+) as a cofactor. As to expression, specifically expressed in ciliated left-right organizer.

The protein resides in the membrane. Its function is as follows. Putative metalloproteinase that plays a role in left-right patterning process. The chain is Ciliated left-right organizer metallopeptidase from Mus musculus (Mouse).